Consider the following 334-residue polypeptide: DNA-directed RNA polymerase subunit alpha (334 aa).

The alpha N-terminal domain (alpha-NTD) stretch occupies residues 1 to 231 (MQSNTFLTPR…EQLSVFADLK (231 aa)). An alpha C-terminal domain (alpha-CTD) region spans residues 245–334 (IDPVLLRPVD…GKKDTSHAAP (90 aa)).

The protein belongs to the RNA polymerase alpha chain family. As to quaternary structure, homodimer. The RNAP catalytic core consists of 2 alpha, 1 beta, 1 beta' and 1 omega subunit. When a sigma factor is associated with the core the holoenzyme is formed, which can initiate transcription.

The catalysed reaction is RNA(n) + a ribonucleoside 5'-triphosphate = RNA(n+1) + diphosphate. In terms of biological role, DNA-dependent RNA polymerase catalyzes the transcription of DNA into RNA using the four ribonucleoside triphosphates as substrates. In Nitrosospira multiformis (strain ATCC 25196 / NCIMB 11849 / C 71), this protein is DNA-directed RNA polymerase subunit alpha.